The chain runs to 447 residues: N-succinylarginine dihydrolase (447 aa).

Residues 19 to 28 (AGLSFGNEAS), Asn110, and 137 to 138 (HR) each bind substrate. Glu174 is a catalytic residue. Arg212 is a substrate binding site. His248 is an active-site residue. Positions 250 and 359 each coordinate substrate. Cys365 acts as the Nucleophile in catalysis.

This sequence belongs to the succinylarginine dihydrolase family. Homodimer.

It carries out the reaction N(2)-succinyl-L-arginine + 2 H2O + 2 H(+) = N(2)-succinyl-L-ornithine + 2 NH4(+) + CO2. It functions in the pathway amino-acid degradation; L-arginine degradation via AST pathway; L-glutamate and succinate from L-arginine: step 2/5. Catalyzes the hydrolysis of N(2)-succinylarginine into N(2)-succinylornithine, ammonia and CO(2). The protein is N-succinylarginine dihydrolase of Escherichia coli O6:K15:H31 (strain 536 / UPEC).